A 122-amino-acid polypeptide reads, in one-letter code: Small ribosomal subunit protein uS13 (122 aa).

The interval 95–122 is disordered; sequence GLPVRGQRTHTNARTRKGKAKPIAGKKK.

Belongs to the universal ribosomal protein uS13 family. In terms of assembly, part of the 30S ribosomal subunit. Forms a loose heterodimer with protein S19. Forms two bridges to the 50S subunit in the 70S ribosome.

Located at the top of the head of the 30S subunit, it contacts several helices of the 16S rRNA. In the 70S ribosome it contacts the 23S rRNA (bridge B1a) and protein L5 of the 50S subunit (bridge B1b), connecting the 2 subunits; these bridges are implicated in subunit movement. Contacts the tRNAs in the A and P-sites. The protein is Small ribosomal subunit protein uS13 of Sphingopyxis alaskensis (strain DSM 13593 / LMG 18877 / RB2256) (Sphingomonas alaskensis).